Consider the following 210-residue polypeptide: Probable membrane protein Rv1733c (210 aa).

2 helical membrane-spanning segments follow: residues 43-63 and 165-185; these read AVVMLLAVTVSLLTIPFAAAA and ALAALGLWLSVAAVAGALLAL.

It localises to the cell membrane. The chain is Probable membrane protein Rv1733c from Mycobacterium tuberculosis (strain ATCC 25618 / H37Rv).